Here is a 178-residue protein sequence, read N- to C-terminus: CASP-like protein 5A1 (178 aa).

Residues 1–24 (MFASRPAVHPVEAPPPTDPVEQPT) form a disordered region. The Cytoplasmic segment spans residues 1–37 (MFASRPAVHPVEAPPPTDPVEQPTGVLMKDLPGMPGT). Residues 38-58 (AGGLGLRVAQFVFAGVALAVM) traverse the membrane as a helical segment. Topologically, residues 59-69 (ASTSDFPSVTA) are extracellular. Residues 70 to 90 (FCYLVAATIMQCLWSFSLAIV) form a helical membrane-spanning segment. Residues 91–105 (DIYALLVKRCLRNRR) lie on the Cytoplasmic side of the membrane. The chain crosses the membrane as a helical span at residues 106–126 (AVCLFAIGDGITAALTFGAAC). The Extracellular segment spans residues 127-152 (SSAGITVLIDNDLNICAENHCGSFKT). Residues 153-173 (ATALAFMSWFALTPSFLLNFW) form a helical membrane-spanning segment. Over 174–178 (SMAAR) the chain is Cytoplasmic.

Belongs to the Casparian strip membrane proteins (CASP) family. In terms of assembly, homodimer and heterodimers.

Its subcellular location is the cell membrane. The polypeptide is CASP-like protein 5A1 (Brachypodium distachyon (Purple false brome)).